The following is a 325-amino-acid chain: TNFAIP3-interacting protein 3 (325 aa).

Disordered stretches follow at residues 1–30 and 84–129; these read MAHF…STRK and RFLS…RLNE. Residues 17 to 28 are compositionally biased toward basic and acidic residues; that stretch reads STEHKECAEPST. Residues 27-265 adopt a coiled-coil conformation; that stretch reads STRKNLMNSL…LEKQLKQMYC (239 aa). Positions 190–248 are ubiquitin-binding domain (UBD); it reads HEEMRTEMEVLKQQVQIYEEDFKKERSDRERLNQEKEELQQINETSQSQLNRLNSQIKA.

As to quaternary structure, interacts with TNFAIP3. Interacts with polyubiquitin. As to expression, highly expressed in lung, lymph node, thymus and fetal liver. Expressed at lower levels in bone marrow, brain, kidney, spleen, leukocytes and tonsils. Could be detected in heart, salivary gland, adrenal gland, pancreas, ovary and fetal brain. High levels detected in liver, colon, small intestine, muscle, stomach, testis, placenta, thyroid, uterus, prostate, skin and PBL.

Binds to zinc finger protein TNFAIP3 and inhibits NF-kappa-B activation induced by tumor necrosis factor, Toll-like receptor 4 (TLR4), interleukin-1 and 12-O-tetradecanoylphorbol-13-acetate. Overexpression inhibits NF-kappa-B-dependent gene expression in response to lipopolysaccharide at a level downstream of TRAF6 and upstream of IKBKB. NF-kappa-B inhibition is independent of TNFAIP3 binding. This Homo sapiens (Human) protein is TNFAIP3-interacting protein 3.